Here is a 358-residue protein sequence, read N- to C-terminus: MDYADFDHQKLVEWLKAHGEKEFHAKQILSWIYQKGVLSWDKMSNLSQSLREKLAKHIRLPVLELVRYTESIDQETIKFLWRLRDGNLVESVLILSGIRRTVCVSSQVGCPAKCAFCASGQQGFFRNLRPTEIIEQILQINAWLSSKGEKVSHVVYMGMGEPLKNYESVVASIRVLSHPDFCNISQRRITVSTVGVVEGIKRLSKEGLKVNLVLSLHAPNQHIRKKIIPYARKYPLEEILESMDEYAQKTKRDITFEYTLLAGINDHPDHAHELAHLLKGKQCTVNLIPYNPIPGLRLKRPEKKAIKQFRSVLYGSHIVNTCRYTKGDDIGAACGQLALQEREGQTGLPMLKEVAFGS.

Residue Glu-90 is the Proton acceptor of the active site. The Radical SAM core domain maps to 96–328 (SGIRRTVCVS…VNTCRYTKGD (233 aa)). A disulfide bond links Cys-103 and Cys-334. Residues Cys-110, Cys-114, and Cys-117 each coordinate [4Fe-4S] cluster. Residues 160 to 161 (GE), Ser-192, 215 to 217 (SLH), and Asn-291 contribute to the S-adenosyl-L-methionine site. Catalysis depends on Cys-334, which acts as the S-methylcysteine intermediate.

This sequence belongs to the radical SAM superfamily. RlmN family. [4Fe-4S] cluster serves as cofactor.

It localises to the cytoplasm. The catalysed reaction is adenosine(2503) in 23S rRNA + 2 reduced [2Fe-2S]-[ferredoxin] + 2 S-adenosyl-L-methionine = 2-methyladenosine(2503) in 23S rRNA + 5'-deoxyadenosine + L-methionine + 2 oxidized [2Fe-2S]-[ferredoxin] + S-adenosyl-L-homocysteine. It carries out the reaction adenosine(37) in tRNA + 2 reduced [2Fe-2S]-[ferredoxin] + 2 S-adenosyl-L-methionine = 2-methyladenosine(37) in tRNA + 5'-deoxyadenosine + L-methionine + 2 oxidized [2Fe-2S]-[ferredoxin] + S-adenosyl-L-homocysteine. Functionally, specifically methylates position 2 of adenine 2503 in 23S rRNA and position 2 of adenine 37 in tRNAs. The protein is Probable dual-specificity RNA methyltransferase RlmN 2 of Protochlamydia amoebophila (strain UWE25).